Reading from the N-terminus, the 519-residue chain is Protein amnionless (519 aa).

The first 19 residues, 1–19 (MGAPGRVLLWLQLCALTRA), serve as a signal peptide directing secretion. Topologically, residues 20–430 (AYKLWVPNTY…NAPGARSDLM (411 aa)) are extracellular. N-linked (GlcNAc...) asparagine glycosylation is found at asparagine 35 and asparagine 39. 6 cysteine pairs are disulfide-bonded: cysteine 43–cysteine 152, cysteine 193–cysteine 267, cysteine 259–cysteine 265, cysteine 277–cysteine 303, cysteine 288–cysteine 304, and cysteine 293–cysteine 307. Residues 67–143 (SDMEELQDRK…VLASGAGFSA (77 aa)) form an interaction with CUBN region. A VWFC domain is found at 256-308 (PEACADPSGCVCGNAEVQPWICAALLQPLGGRCPQAACQDALRPEGQCCDLCG). A helical transmembrane segment spans residues 431-451 (GGLVAALLLLLLVLLVAALLL). The Cytoplasmic portion of the chain corresponds to 452 to 519 (RRAGRLRWSR…YGEAEAEAEA (68 aa)).

As to quaternary structure, interacts (via extracellular region) with CUBN/cubilin, giving rise to a huge complex containing one AMN chain and three CUBN chains. Post-translationally, N-glycosylated. A soluble form arises by proteolytic removal of the membrane anchor. As to expression, detected in kidney cortex (at protein level).

Its subcellular location is the apical cell membrane. The protein resides in the cell membrane. It localises to the endosome membrane. It is found in the membrane. The protein localises to the coated pit. In terms of biological role, membrane-bound component of the endocytic receptor formed by AMN and CUBN. Required for normal CUBN glycosylation and trafficking to the cell surface. The complex formed by AMN and CUBN is required for efficient absorption of vitamin B12. Required for normal CUBN-mediated protein transport in the kidney. This Sus scrofa (Pig) protein is Protein amnionless (AMN).